A 371-amino-acid polypeptide reads, in one-letter code: Cytochrome b (371 aa).

Transmembrane regions (helical) follow at residues 25–45 (FGSM…SLSM), 69–90 (WVMQ…YMYI), 105–125 (WLSG…GYVL), and 170–190 (FFAL…IHIM). His-75 provides a ligand contact to heme b. His-174 and His-188 together coordinate heme b. A ubiquinone is bound at residue His-193. A run of 4 helical transmembrane segments spans residues 218–238 (YKDI…VSFF), 280–300 (LGGA…PFTH), 312–332 (LMQF…WTAT), and 339–358 (FTTI…MSNP).

Belongs to the cytochrome b family. The cytochrome bc1 complex contains 3 respiratory subunits (MT-CYB, CYC1 and UQCRFS1), 2 core proteins (UQCRC1 and UQCRC2) and probably 6 low-molecular weight proteins. The cofactor is heme b.

The protein resides in the mitochondrion inner membrane. In terms of biological role, component of the ubiquinol-cytochrome c reductase complex (complex III or cytochrome b-c1 complex) that is part of the mitochondrial respiratory chain. The b-c1 complex mediates electron transfer from ubiquinol to cytochrome c. Contributes to the generation of a proton gradient across the mitochondrial membrane that is then used for ATP synthesis. The protein is Cytochrome b (MT-CYB) of Candoia aspera (New Guinea boa).